Reading from the N-terminus, the 123-residue chain is Large ribosomal subunit protein bL17 (123 aa).

It belongs to the bacterial ribosomal protein bL17 family. As to quaternary structure, part of the 50S ribosomal subunit. Contacts protein L32.

This is Large ribosomal subunit protein bL17 from Mycoplasma genitalium (strain ATCC 33530 / DSM 19775 / NCTC 10195 / G37) (Mycoplasmoides genitalium).